The following is a 635-amino-acid chain: Phosphatidylserine decarboxylase proenzyme 3 (635 aa).

The interval 1-42 is disordered; sequence MGNGNSTETKESRRSKMRKKIQNFRSRRRLSRPGSGSVSGLA. A lipid anchor (N-myristoyl glycine) is attached at Gly-2. The segment covering 15 to 31 has biased composition (basic residues); the sequence is SKMRKKIQNFRSRRRLS. Positions 22–147 constitute a C2 domain; it reads QNFRSRRRLS…VVQEPDSTCK (126 aa). EF-hand domains lie at 180 to 210 and 211 to 246; these read AKRILSIVDYDEDGKLSFSEFSDLMNAFGNV and VAANKKEELFKAADLNGDGVVTIDELAALLAVQQEQ. Ca(2+) is bound by residues Asp-188, Asp-190, Asp-192, Lys-194, Glu-199, Asp-224, Asn-226, Asp-228, and Glu-235. Catalysis depends on charge relay system; for autoendoproteolytic cleavage activity residues Asp-442, His-498, and Ser-586. Ser-586 acts as the Schiff-base intermediate with substrate; via pyruvic acid; for decarboxylase activity in catalysis. Ser-586 carries the post-translational modification Pyruvic acid (Ser); by autocatalysis.

Belongs to the phosphatidylserine decarboxylase family. PSD-B subfamily. Eukaryotic type II sub-subfamily. In terms of assembly, heterodimer of a large membrane-associated beta subunit and a small pyruvoyl-containing alpha subunit. The cofactor is pyruvate. Is synthesized initially as an inactive proenzyme. Formation of the active enzyme involves a self-maturation process in which the active site pyruvoyl group is generated from an internal serine residue via an autocatalytic post-translational modification. Two non-identical subunits are generated from the proenzyme in this reaction, and the pyruvate is formed at the N-terminus of the alpha chain, which is derived from the carboxyl end of the proenzyme. The autoendoproteolytic cleavage occurs by a canonical serine protease mechanism, in which the side chain hydroxyl group of the serine supplies its oxygen atom to form the C-terminus of the beta chain, while the remainder of the serine residue undergoes an oxidative deamination to produce ammonia and the pyruvoyl prosthetic group on the alpha chain. During this reaction, the Ser that is part of the protease active site of the proenzyme becomes the pyruvoyl prosthetic group, which constitutes an essential element of the active site of the mature decarboxylase. Expressed in roots, leaves, stems and flowers.

It is found in the endoplasmic reticulum membrane. The enzyme catalyses a 1,2-diacyl-sn-glycero-3-phospho-L-serine + H(+) = a 1,2-diacyl-sn-glycero-3-phosphoethanolamine + CO2. It participates in phospholipid metabolism; phosphatidylethanolamine biosynthesis; phosphatidylethanolamine from CDP-diacylglycerol: step 2/2. Its function is as follows. Catalyzes the formation of phosphatidylethanolamine (PtdEtn) from phosphatidylserine (PtdSer). Plays a central role in phospholipid metabolism and in the interorganelle trafficking of phosphatidylserine. Contributes only to a minor proportion of PtdEtn production. In Arabidopsis thaliana (Mouse-ear cress), this protein is Phosphatidylserine decarboxylase proenzyme 3 (PSD3).